The primary structure comprises 826 residues: MSRPNDRITLPPANAQRTNMTCHFCIVGCGYHVYKWPELQEGGRAPEQNALGLDFRKQLPPLAVTLTPAMTNVVTEHNGRRYNIMVVPDKACVVNSGLSSTRGGKMASYMYTPTGDGKQRLKAPRLYAADQWVDTTWDHAMALYAGLIKKTLDKDGPQGVFFSCFDHGGAGGGFENTWGTGKLMFSAIQTPMVRIHNRPAYNSECHATREMGIGELNNAYEDAQLADVIWSIGNNPYESQTNYFLNHWLPNLQGATTSKKKERFPNENFPQARIIFVDPRETPSVAIARHVAGNDRVLHLAIEPGTDTALFNGLFTYVVEQGWIDKPFIEAHTKGFDDAVKTNRLSLDECSNITGVPVDMLKRAAEWSYKPKASGQAPRTMHAYEKGIIWGNDNYVIQSALLDLVIATHNVGRRGTGCVRMGGHQEGYTRPPYPGDKKIYIDQELIKGKGRIMTWWGCNNFQTSNNAQALREAILQRSAIVKQAMQKARGATTEEMVDVIYEATQNGGLFVTSINLYPTKLAEAAHLMLPAAHPGEMNLTSMNGERRIRLSEKFMDPPGTAMADCLIAARIANALRDMYQKDGKAEMAAQFEGFDWKTEEDAFNDGFRRAGQPGAPAIDSQGGSTGHLVTYDRLRKSGNNGVQLPVVSWDESKGLVGTEMLYTEGKFDTDDGKAHFKPAPWNGLPATVQQQKDKYRFWLNNGRNNEVWQTAYHDQYNSLMQERYPMAYIEMNPDDCKQLDVTGGDIVEVYNDFGSTFAMVYPVAEIKRGQTFMLFGYVNGIQGDVTTDWTDRNIIPYYKGTWGDIRKVGSMEEFKRTVSFKSRRFA.

Residues Cys-22, Cys-25, and Cys-29 each contribute to the [3Fe-4S] cluster site. Substrate contacts are provided by His-196, Glu-204, Arg-420, and His-424.

The protein belongs to the prokaryotic molybdopterin-containing oxidoreductase family. Heterodimer consisting of a large and a small subunit. [3Fe-4S] cluster is required as a cofactor. Mo-bis(molybdopterin guanine dinucleotide) serves as cofactor.

The enzyme catalyses 2 oxidized [azurin] + arsenite + H2O = 2 reduced [azurin] + arsenate + 3 H(+). Functionally, involved in the detoxification of arsenic. Oxidizes As(III)O3(3-) (arsenite) to the somewhat less toxic As(V)O4(3-) (arsenate). The sequence is that of Arsenite oxidase subunit AioA (aioA) from Alcaligenes faecalis.